The following is a 144-amino-acid chain: 3-dehydroquinate dehydratase (144 aa).

Catalysis depends on Tyr22, which acts as the Proton acceptor. Substrate is bound by residues Asn73, His79, and Asp86. His99 serves as the catalytic Proton donor. Residues 100–101 (LS) and Arg110 contribute to the substrate site.

This sequence belongs to the type-II 3-dehydroquinase family. In terms of assembly, homododecamer.

The catalysed reaction is 3-dehydroquinate = 3-dehydroshikimate + H2O. It functions in the pathway metabolic intermediate biosynthesis; chorismate biosynthesis; chorismate from D-erythrose 4-phosphate and phosphoenolpyruvate: step 3/7. Its function is as follows. Catalyzes a trans-dehydration via an enolate intermediate. The chain is 3-dehydroquinate dehydratase from Geotalea daltonii (strain DSM 22248 / JCM 15807 / FRC-32) (Geobacter daltonii).